We begin with the raw amino-acid sequence, 200 residues long: 3-isopropylmalate dehydratase small subunit (200 aa).

This sequence belongs to the LeuD family. LeuD type 1 subfamily. Heterodimer of LeuC and LeuD.

The catalysed reaction is (2R,3S)-3-isopropylmalate = (2S)-2-isopropylmalate. It participates in amino-acid biosynthesis; L-leucine biosynthesis; L-leucine from 3-methyl-2-oxobutanoate: step 2/4. Functionally, catalyzes the isomerization between 2-isopropylmalate and 3-isopropylmalate, via the formation of 2-isopropylmaleate. This Methylobacterium radiotolerans (strain ATCC 27329 / DSM 1819 / JCM 2831 / NBRC 15690 / NCIMB 10815 / 0-1) protein is 3-isopropylmalate dehydratase small subunit.